The primary structure comprises 244 residues: rRNA adenine N-6-methyltransferase (244 aa).

6 residues coordinate S-adenosyl-L-methionine: Asn-11, Ile-13, Gly-38, Glu-59, Asp-84, and Asn-101.

This sequence belongs to the class I-like SAM-binding methyltransferase superfamily. rRNA adenine N(6)-methyltransferase family.

It carries out the reaction adenosine(2085) in 23S rRNA + 2 S-adenosyl-L-methionine = N(6)-dimethyladenosine(2085) in 23S rRNA + 2 S-adenosyl-L-homocysteine + 2 H(+). Functionally, this protein produces a dimethylation of the adenine residue at position 2085 in 23S rRNA, resulting in reduced affinity between ribosomes and macrolide-lincosamide-streptogramin B antibiotics. The sequence is that of rRNA adenine N-6-methyltransferase (ermM) from Staphylococcus epidermidis.